The primary structure comprises 373 residues: Probable ethanolamine permease EutH (373 aa).

Transmembrane regions (helical) follow at residues 5-25 (EIIIYLMVIFMILGAIDKIIG), 38-58 (IMAMGSLTLAMVGIITLAPVL), 61-81 (ILSPIVVPIYTALGADPAMFA), 111-131 (ILGSMMGPTIVFTIPVALGII), 143-163 (VLSGIITIPIGCLIGGLVAGF), 166-186 (IMIFKNLVPIILVAALIMLGL), 197-217 (FTIFGKGVVIVATIGLVAGAI), 236-256 (IEIVGGIALVLAGAFCLVFVI), 307-327 (VAFAVSAAFVLGDHLGFTAGV), and 331-351 (MIFPMIVGKLVGGVTAVAVGI).

It belongs to the EutH family.

It localises to the cell membrane. The enzyme catalyses ethanolamine(in) = ethanolamine(out). In terms of biological role, probably involved in the diffusion of protonated ethanolamine (EA) into the cell at low pH. At low pH most EA is protonated, and this permease becomes necessary. Contributes to bacterial survival and replication in acidic macrophage vacuoles, but not to bacterial uptake by macrophages. This Listeria monocytogenes serotype 1/2a (strain 10403S) protein is Probable ethanolamine permease EutH.